The chain runs to 3259 residues: Golgin subfamily B member 1 (3259 aa).

Position 1 is an N-acetylmethionine (methionine 1). The Cytoplasmic segment spans residues 1-3235; it reads MLSRLSGLAN…LRSLCHSRTR (3235 aa). Phosphoserine occurs at positions 6, 17, 138, and 528. Positions 48-593 form a coiled coil; it reads EDVQERLAYA…RAEEADHEVL (546 aa). The segment at 119–142 is disordered; that stretch reads GTVLPTEPQSEEQLSKHDKSSTEE. The segment covering 131-142 has biased composition (basic and acidic residues); the sequence is QLSKHDKSSTEE. Positions 624–652 are disordered; the sequence is LMPNEESSLPAVEKEQASTEHQSRTSEEI. Residues 635 to 650 are compositionally biased toward basic and acidic residues; sequence VEKEQASTEHQSRTSE. Phosphoserine is present on serine 653. 3 coiled-coil regions span residues 677–1028, 1062–1245, and 1301–1779; these read DIGQ…KEIP, LKQT…ESID, and GTSV…TEKH. A disordered region spans residues 944–963; the sequence is AKKEQVEEDNEVSSGLKQNY. The span at 1747–1763 shows a compositional bias: basic and acidic residues; sequence SEKDSLSEEVQDLKHQI. The interval 1747-1829 is disordered; that stretch reads SEKDSLSEEV…SANPAVSKDF (83 aa). Polar residues-rich tracts occupy residues 1782 to 1794 and 1802 to 1820; these read QTNV…QSIP and SLSM…SAKS. The stretch at 1828–3185 forms a coiled coil; the sequence is DFSSHDEINN…EQIRRLEHSE (1358 aa). Residues serine 2216, serine 2735, serine 2872, and serine 2884 each carry the phosphoserine modification. A disordered region spans residues 2856–2876; the sequence is RKSEEGKQRSAAQPSTSPAEV. Positions 2865 to 2875 are enriched in polar residues; the sequence is SAAQPSTSPAE. The interval 2998–3021 is disordered; that stretch reads TQPLKVQYQRQASPETSASPDGSQ. Serine 3037 bears the Phosphoserine mark. Positions 3107–3140 are disordered; the sequence is IDVAPGAPQEKNGVHRKSDPEELREPQQSFSEAQ. Basic and acidic residues predominate over residues 3118–3131; it reads NGVHRKSDPEELRE. Residues 3236-3256 form a helical membrane-spanning segment; it reads VPLLAAIYFLMIHVLLILCFT. The Lumenal portion of the chain corresponds to 3257–3259; the sequence is GHL.

In terms of assembly, homodimer; disulfide-linked. Interacts with PLK3.

It localises to the golgi apparatus membrane. Its function is as follows. May participate in forming intercisternal cross-bridges of the Golgi complex. In Homo sapiens (Human), this protein is Golgin subfamily B member 1 (GOLGB1).